The sequence spans 303 residues: Protein transport protein SEC13-2 (303 aa).

6 WD repeats span residues 7 to 46, 53 to 95, 102 to 143, 149 to 202, 209 to 251, and 261 to 300; these read AHEG…NSSS, GHEG…GKMQ, VHSA…IAST, AHKF…ETYV, GHKD…KKND, and KFEQ…KWEE.

It belongs to the WD repeat SEC13 family. The COPII coat is composed of at least 5 proteins: the SEC23/24 complex, the SEC13/31 complex, and the protein SAR1. Component of the nuclear pore complex (NPC). NPC constitutes the exclusive means of nucleocytoplasmic transport. NPCs allow the passive diffusion of ions and small molecules and the active, nuclear transport receptor-mediated bidirectional transport of macromolecules such as proteins, RNAs, ribonucleoparticles (RNPs), and ribosomal subunits across the nuclear envelope. Due to its 8-fold rotational symmetry, all subunits are present with 8 copies or multiples thereof.

The protein localises to the cytoplasmic vesicle. It is found in the COPII-coated vesicle membrane. It localises to the endoplasmic reticulum membrane. The protein resides in the nucleus. Its subcellular location is the nuclear pore complex. In terms of biological role, component of the coat protein complex II (COPII) which promotes the formation of transport vesicles from the endoplasmic reticulum (ER). The coat has two main functions, the physical deformation of the endoplasmic reticulum membrane into vesicles and the selection of cargo molecules. It also functions as a component of the nuclear pore complex (NPC). NPC components, collectively referred to as nucleoporins (NUPs), can play the role of both NPC structural components and of docking or interaction partners for transiently associated nuclear transport factors. SEC13 is required for efficient mRNA export from the nucleus to the cytoplasm and for correct nuclear pore biogenesis and distribution. The polypeptide is Protein transport protein SEC13-2 (SEC132) (Candida glabrata (strain ATCC 2001 / BCRC 20586 / JCM 3761 / NBRC 0622 / NRRL Y-65 / CBS 138) (Yeast)).